Here is a 530-residue protein sequence, read N- to C-terminus: Glucose-6-phosphate isomerase (530 aa).

The active-site Proton donor is the Glu322. Active-site residues include His351 and Lys455.

This sequence belongs to the GPI family.

The protein resides in the cytoplasm. It catalyses the reaction alpha-D-glucose 6-phosphate = beta-D-fructose 6-phosphate. The protein operates within carbohydrate biosynthesis; gluconeogenesis. Its pathway is carbohydrate degradation; glycolysis; D-glyceraldehyde 3-phosphate and glycerone phosphate from D-glucose: step 2/4. Functionally, catalyzes the reversible isomerization of glucose-6-phosphate to fructose-6-phosphate. In Geotalea daltonii (strain DSM 22248 / JCM 15807 / FRC-32) (Geobacter daltonii), this protein is Glucose-6-phosphate isomerase.